The primary structure comprises 626 residues: Bifurcating [FeFe] hydrogenase beta subunit (626 aa).

NAD(+) is bound at residue 198–201 (GGGG). Residues K207 and 224 to 228 (NGDEG) contribute to the FMN site. D229 is a binding site for NAD(+). Residues 312–317 (FVCGEE) and 350–352 (INN) contribute to the FMN site. [4Fe-4S] cluster-binding residues include C485, C488, C491, C531, C578, C581, C584, C588, C608, C611, C614, and C618. 2 4Fe-4S ferredoxin-type domains span residues 569 to 598 (KKYV…GERG) and 599 to 626 (KPYT…IELV).

Belongs to the complex I 51 kDa subunit family. Heterotrimer composed of HydA (alpha subunit), HydB (beta subunit) and HydC (gamma subunit). Near neutral and acidic pH conditions favor oligomerization of the heterotrimeric holoenzyme. The cofactor is [2Fe-2S] cluster. [4Fe-4S] cluster is required as a cofactor. It depends on FMN as a cofactor.

It is found in the cytoplasm. The catalysed reaction is 2 H2 + 2 oxidized [2Fe-2S]-[ferredoxin] + NAD(+) = 2 reduced [2Fe-2S]-[ferredoxin] + NADH + 3 H(+). In terms of biological role, catalyzes the oxidation of the physiological electron carriers NADH and reduced ferredoxin, coupled to the production of H(2). Acts as a bifurcating [FeFe] hydrogenase, which uses the exergonic oxidation of reduced ferredoxin to drive the unfavorable oxidation of NADH to produce H(2). The beta subunit contains flavin- and NAD-binding sites and is potentially the site for NADH oxidation, with the subsequent shuttling of electrons to the alpha subunit. In Thermotoga maritima (strain ATCC 43589 / DSM 3109 / JCM 10099 / NBRC 100826 / MSB8), this protein is Bifurcating [FeFe] hydrogenase beta subunit.